Consider the following 307-residue polypeptide: Acetyl-coenzyme A carboxylase carboxyl transferase subunit beta (307 aa).

The 270-residue stretch at valine 25–lysine 294 folds into the CoA carboxyltransferase N-terminal domain. Zn(2+) contacts are provided by cysteine 29, cysteine 32, cysteine 48, and cysteine 51. The C4-type zinc-finger motif lies at cysteine 29 to cysteine 51.

This sequence belongs to the AccD/PCCB family. Acetyl-CoA carboxylase is a heterohexamer composed of biotin carboxyl carrier protein (AccB), biotin carboxylase (AccC) and two subunits each of ACCase subunit alpha (AccA) and ACCase subunit beta (AccD). Zn(2+) serves as cofactor.

The protein resides in the cytoplasm. It carries out the reaction N(6)-carboxybiotinyl-L-lysyl-[protein] + acetyl-CoA = N(6)-biotinyl-L-lysyl-[protein] + malonyl-CoA. It functions in the pathway lipid metabolism; malonyl-CoA biosynthesis; malonyl-CoA from acetyl-CoA: step 1/1. Component of the acetyl coenzyme A carboxylase (ACC) complex. Biotin carboxylase (BC) catalyzes the carboxylation of biotin on its carrier protein (BCCP) and then the CO(2) group is transferred by the transcarboxylase to acetyl-CoA to form malonyl-CoA. The protein is Acetyl-coenzyme A carboxylase carboxyl transferase subunit beta of Photobacterium profundum (strain SS9).